The following is a 210-amino-acid chain: uncharacterized protein (210 aa).

A Fe2OG dioxygenase domain is found at 90–193 (KPDQIIVNEY…RISITFRNVI (104 aa)).

This is an uncharacterized protein from Acanthamoeba polyphaga (Amoeba).